Here is a 169-residue protein sequence, read N- to C-terminus: Probable chemoreceptor glutamine deamidase CheD (169 aa).

The protein belongs to the CheD family.

The catalysed reaction is L-glutaminyl-[protein] + H2O = L-glutamyl-[protein] + NH4(+). Probably deamidates glutamine residues to glutamate on methyl-accepting chemotaxis receptors (MCPs), playing an important role in chemotaxis. This is Probable chemoreceptor glutamine deamidase CheD from Solibacter usitatus (strain Ellin6076).